A 55-amino-acid chain; its full sequence is ATP synthase protein 8 (55 aa).

Residues 7-24 form a helical membrane-spanning segment; that stretch reads NPWLFIMLMSWLTFSLII. The disordered stretch occupies residues 35–55; the sequence is NPPSNKTPTTTKTSPWTWPWT. Residues 37–55 are compositionally biased toward low complexity; it reads PSNKTPTTTKTSPWTWPWT.

Belongs to the ATPase protein 8 family. In terms of assembly, F-type ATPases have 2 components, CF(1) - the catalytic core - and CF(0) - the membrane proton channel.

It is found in the mitochondrion membrane. In terms of biological role, mitochondrial membrane ATP synthase (F(1)F(0) ATP synthase or Complex V) produces ATP from ADP in the presence of a proton gradient across the membrane which is generated by electron transport complexes of the respiratory chain. F-type ATPases consist of two structural domains, F(1) - containing the extramembraneous catalytic core and F(0) - containing the membrane proton channel, linked together by a central stalk and a peripheral stalk. During catalysis, ATP synthesis in the catalytic domain of F(1) is coupled via a rotary mechanism of the central stalk subunits to proton translocation. Part of the complex F(0) domain. Minor subunit located with subunit a in the membrane. This Corythaeola cristata (Great blue turaco) protein is ATP synthase protein 8 (MT-ATP8).